The following is a 428-amino-acid chain: Serine--tRNA ligase (428 aa).

234-236 contacts L-serine; it reads TAE. 265–267 lines the ATP pocket; that stretch reads RRE. Residue glutamate 288 participates in L-serine binding. Position 352-355 (352-355) interacts with ATP; the sequence is EISS. Serine 388 contributes to the L-serine binding site.

This sequence belongs to the class-II aminoacyl-tRNA synthetase family. Type-1 seryl-tRNA synthetase subfamily. In terms of assembly, homodimer. The tRNA molecule binds across the dimer.

Its subcellular location is the cytoplasm. The enzyme catalyses tRNA(Ser) + L-serine + ATP = L-seryl-tRNA(Ser) + AMP + diphosphate + H(+). It catalyses the reaction tRNA(Sec) + L-serine + ATP = L-seryl-tRNA(Sec) + AMP + diphosphate + H(+). The protein operates within aminoacyl-tRNA biosynthesis; selenocysteinyl-tRNA(Sec) biosynthesis; L-seryl-tRNA(Sec) from L-serine and tRNA(Sec): step 1/1. Functionally, catalyzes the attachment of serine to tRNA(Ser). Is also able to aminoacylate tRNA(Sec) with serine, to form the misacylated tRNA L-seryl-tRNA(Sec), which will be further converted into selenocysteinyl-tRNA(Sec). This is Serine--tRNA ligase from Synechococcus elongatus (strain ATCC 33912 / PCC 7942 / FACHB-805) (Anacystis nidulans R2).